The primary structure comprises 158 residues: Large ribosomal subunit protein bL21 (158 aa).

The tract at residues 127-158 (TQETKSAASVKKAAKKSAPQKQAAVASNSKED) is disordered. The segment covering 131 to 158 (KSAASVKKAAKKSAPQKQAAVASNSKED) has biased composition (low complexity).

The protein belongs to the bacterial ribosomal protein bL21 family. In terms of assembly, part of the 50S ribosomal subunit. Contacts protein L20.

Its function is as follows. This protein binds to 23S rRNA in the presence of protein L20. This is Large ribosomal subunit protein bL21 from Bartonella henselae (strain ATCC 49882 / DSM 28221 / CCUG 30454 / Houston 1) (Rochalimaea henselae).